We begin with the raw amino-acid sequence, 65 residues long: Prokaryotic ubiquitin-like protein Pup (65 aa).

The disordered stretch occupies residues 1–38 (MANAQQQVFGGGGGDDAENNDAPQQGSGTQQVNVTGTD). The interval 21-59 (DAPQQGSGTQQVNVTGTDDLLDEIDGLLETNAEEFVRSY) is ARC ATPase binding. Over residues 22-34 (APQQGSGTQQVNV) the composition is skewed to polar residues. Gln-65 carries the post-translational modification Deamidated glutamine. Gln-65 participates in a covalent cross-link: Isoglutamyl lysine isopeptide (Gln-Lys) (interchain with K-? in acceptor proteins).

It belongs to the prokaryotic ubiquitin-like protein family. As to quaternary structure, strongly interacts with the proteasome-associated ATPase ARC through a hydrophobic interface; the interacting region of Pup lies in its C-terminal half. There is one Pup binding site per ARC hexamer ring. Post-translationally, is modified by deamidation of its C-terminal glutamine to glutamate by the deamidase Dop, a prerequisite to the subsequent pupylation process.

It functions in the pathway protein degradation; proteasomal Pup-dependent pathway. In terms of biological role, protein modifier that is covalently attached to lysine residues of substrate proteins, thereby targeting them for proteasomal degradation. The tagging system is termed pupylation. In Corynebacterium urealyticum (strain ATCC 43042 / DSM 7109), this protein is Prokaryotic ubiquitin-like protein Pup.